Here is a 153-residue protein sequence, read N- to C-terminus: NADPH-dependent 7-cyano-7-deazaguanine reductase (153 aa).

A disordered region spans residues 1–30 (MDSIETHAKQLGQQTPLPASPEAAQLDRVP). The Thioimide intermediate role is filled by C51. D58 serves as the catalytic Proton donor. Substrate-binding positions include 73–75 (VES) and 92–93 (HE).

It belongs to the GTP cyclohydrolase I family. QueF type 1 subfamily.

It is found in the cytoplasm. The enzyme catalyses 7-aminomethyl-7-carbaguanine + 2 NADP(+) = 7-cyano-7-deazaguanine + 2 NADPH + 3 H(+). It participates in tRNA modification; tRNA-queuosine biosynthesis. In terms of biological role, catalyzes the NADPH-dependent reduction of 7-cyano-7-deazaguanine (preQ0) to 7-aminomethyl-7-deazaguanine (preQ1). The chain is NADPH-dependent 7-cyano-7-deazaguanine reductase from Methylorubrum extorquens (strain CM4 / NCIMB 13688) (Methylobacterium extorquens).